The sequence spans 180 residues: UPF0398 protein EF_1150 (180 aa).

The protein belongs to the UPF0398 family.

In Enterococcus faecalis (strain ATCC 700802 / V583), this protein is UPF0398 protein EF_1150.